Here is a 20-residue protein sequence, read N- to C-terminus: Pregnancy-associated glycoprotein 73B (20 aa).

This sequence belongs to the peptidase A1 family. In terms of processing, N-glycosylated. Expressed in chorionic epithelium (trophectoderm).

It is found in the secreted. The protein localises to the extracellular space. This Bubalus bubalis (Domestic water buffalo) protein is Pregnancy-associated glycoprotein 73B.